Here is an 87-residue protein sequence, read N- to C-terminus: Small ribosomal subunit protein bS20 (87 aa).

A disordered region spans residues Met1 to Gln22.

This sequence belongs to the bacterial ribosomal protein bS20 family.

Binds directly to 16S ribosomal RNA. The chain is Small ribosomal subunit protein bS20 from Corynebacterium glutamicum (strain R).